Reading from the N-terminus, the 246-residue chain is Probable site-specific recombinase in afa region (246 aa).

The Tyr recombinase domain maps to 40–225 (ATPAYLLAPE…FALDMAATLA (186 aa)). Active-site residues include R75, K102, H177, R180, and H203. The O-(3'-phospho-DNA)-tyrosine intermediate role is filled by Y212.

Belongs to the 'phage' integrase family.

The chain is Probable site-specific recombinase in afa region (int) from Escherichia coli.